A 352-amino-acid chain; its full sequence is Forkhead box protein D5 (352 aa).

2 disordered regions span residues 1 to 32 (MSLSQESGAHHDPQDYPVVSDEEDEIDILGED) and 47 to 92 (HSEM…GKAK). Acidic residues predominate over residues 20 to 32 (SDEEDEIDILGED). The span at 73-82 (ESEGGTSKDS) shows a compositional bias: low complexity. Positions 97–191 (KPPYSYIALI…DNGSFLRRRK (95 aa)) form a DNA-binding region, fork-head.

In terms of tissue distribution, expression begins in the newly forming dorsal mesoderm and is maintained during gastrulation at the dorsal blastopore lip (Spemann organizer). At the early neurula stages, expressed in a row of cells along the dorsal midline that are destined to become the fllor plate of the neural tube. At late neurula, expressed within the anterior and posterior poles of the embryo. After neural closure, expression is detected only in the tailtip, the otic vesicle and at the midbrain/hindbrain boundary.

The protein resides in the nucleus. In terms of biological role, transcriptional repressor. This Xenopus tropicalis (Western clawed frog) protein is Forkhead box protein D5.